We begin with the raw amino-acid sequence, 165 residues long: UPF0262 protein blr1257 (165 aa).

The protein belongs to the UPF0262 family.

The sequence is that of UPF0262 protein blr1257 from Bradyrhizobium diazoefficiens (strain JCM 10833 / BCRC 13528 / IAM 13628 / NBRC 14792 / USDA 110).